Here is a 250-residue protein sequence, read N- to C-terminus: Malonyl-[acyl-carrier protein] O-methyltransferase (250 aa).

The protein belongs to the methyltransferase superfamily.

It catalyses the reaction malonyl-[ACP] + S-adenosyl-L-methionine = malonyl-[ACP] methyl ester + S-adenosyl-L-homocysteine. It participates in cofactor biosynthesis; biotin biosynthesis. Converts the free carboxyl group of a malonyl-thioester to its methyl ester by transfer of a methyl group from S-adenosyl-L-methionine (SAM). It allows to synthesize pimeloyl-ACP via the fatty acid synthetic pathway. The chain is Malonyl-[acyl-carrier protein] O-methyltransferase from Neorickettsia risticii (strain Illinois).